The primary structure comprises 185 residues: Ribosome-recycling factor (185 aa).

This sequence belongs to the RRF family.

Its subcellular location is the cytoplasm. Functionally, responsible for the release of ribosomes from messenger RNA at the termination of protein biosynthesis. May increase the efficiency of translation by recycling ribosomes from one round of translation to another. In Lactococcus lactis subsp. lactis (strain IL1403) (Streptococcus lactis), this protein is Ribosome-recycling factor.